The following is a 538-amino-acid chain: Ribosome-associated complex subunit SSZ1 (538 aa).

Residues 400–538 (PVIVNTPHLK…KTGNAVKGEL (139 aa)) are peptide-binding domain. The interval 464–484 (PIPKEENAEEDDESEWSDDEP) is disordered. Residues 470–484 (NAEEDDESEWSDDEP) are compositionally biased toward acidic residues. A phosphoserine mark is found at serine 477 and serine 480.

Belongs to the heat shock protein 70 family. RAC is a heterodimer of the Hsp70/DnaK-type chaperone SSZ1 and the Hsp40/DnaJ-type chaperone ZUO1. RAC associates with ribosomes via ZUO1.

The protein localises to the cytoplasm. Its function is as follows. Component of the ribosome-associated complex (RAC), a heterodimeric chaperone complex involved in regulation of accurate translation termination and in folding or maintaining nascent polypeptides in a folding-competent state. RAC stimulates the ATPase activity of the ribosome-associated pool of Hsp70-type chaperones SSB1/SSB2 that bind to the nascent polypeptide chain. SSZ1 is required for ZUO1 to function efficiently as a J-protein for SSB1/SSB2. Also involved in pleiotropic drug resistance by post-translational activation of transcription factor PDR1. The polypeptide is Ribosome-associated complex subunit SSZ1 (SSZ1) (Saccharomyces cerevisiae (strain ATCC 204508 / S288c) (Baker's yeast)).